A 264-amino-acid polypeptide reads, in one-letter code: MQNELNPILLSQNSIRFATRVAIFFIIRDELVEAVTWRHPVKSMCLGLTITLLYLHPVSFSAILLLVFLTMMPISMTHDVTTNLKDLQNFMASYSSSYDQLLYFRQNYYHHITPSAISSGLLVSLVLIFLLAYLRISIDRYLPIAIWIGLISLHPKLRSYLIQFYSAKRDHVPYLQIRNELAQVWRHVDISGSQTTTRYTSFPKFNPENSVTSLDLVEPPENYSWAPQSDWTFVPPNEFRRFILWSPQPPKMNRKSSHGSNLPL.

The next 3 helical transmembrane spans lie at 48 to 68 (LTIT…LLVF), 112 to 132 (ITPS…FLLA), and 142 to 162 (LPIA…SYLI). A Phosphoserine modification is found at Ser260.

The protein localises to the membrane. This is an uncharacterized protein from Schizosaccharomyces pombe (strain 972 / ATCC 24843) (Fission yeast).